The chain runs to 316 residues: MDKENFTRLRGELFCDHPLARYTSWRVGGKAERFYRPADLFDLQDFLTQLPSDEPLTWLGLGSNVLIRDGGIKGTVILTLNRLKELSVVNSQLVFREKSGTEDFFSGNGKTIIRAEAGVTCAKLAKFCVSQGLEDGAFFAGIPGTVGGALAMNAGAFGGETWRTVIGVETMNHQGEILKRTPDEFKIHYRQVEGLENQFFIAGYFCFNHGDPDKAKTAINALLKKRNLSQPIGKYSCGSVFRNPPGDYAARLIESAGLKGKSIGNAEVSEKHANFILNKGNASAADIEALIHYVAQHVSQIHGIQLVKEVHIIGRS.

The region spanning 27 to 225 (VGGKAERFYR…KTAINALLKK (199 aa)) is the FAD-binding PCMH-type domain. Arg-190 is an active-site residue. Residue Ser-239 is the Proton donor of the active site. Glu-309 is a catalytic residue.

It belongs to the MurB family. FAD serves as cofactor.

It is found in the cytoplasm. The enzyme catalyses UDP-N-acetyl-alpha-D-muramate + NADP(+) = UDP-N-acetyl-3-O-(1-carboxyvinyl)-alpha-D-glucosamine + NADPH + H(+). It participates in cell wall biogenesis; peptidoglycan biosynthesis. Functionally, cell wall formation. The polypeptide is UDP-N-acetylenolpyruvoylglucosamine reductase (Coxiella burnetii (strain RSA 331 / Henzerling II)).